The sequence spans 478 residues: Protein nucleotidyltransferase YdiU (478 aa).

ATP contacts are provided by Gly84, Gly86, Arg87, Lys107, Asp119, Gly120, Arg170, and Arg177. Residue Asp246 is the Proton acceptor of the active site. Residues Asn247 and Asp256 each coordinate Mg(2+). Residue Asp256 coordinates ATP.

It belongs to the SELO family. Mg(2+) serves as cofactor. Requires Mn(2+) as cofactor.

The catalysed reaction is L-seryl-[protein] + ATP = 3-O-(5'-adenylyl)-L-seryl-[protein] + diphosphate. It catalyses the reaction L-threonyl-[protein] + ATP = 3-O-(5'-adenylyl)-L-threonyl-[protein] + diphosphate. It carries out the reaction L-tyrosyl-[protein] + ATP = O-(5'-adenylyl)-L-tyrosyl-[protein] + diphosphate. The enzyme catalyses L-histidyl-[protein] + UTP = N(tele)-(5'-uridylyl)-L-histidyl-[protein] + diphosphate. The catalysed reaction is L-seryl-[protein] + UTP = O-(5'-uridylyl)-L-seryl-[protein] + diphosphate. It catalyses the reaction L-tyrosyl-[protein] + UTP = O-(5'-uridylyl)-L-tyrosyl-[protein] + diphosphate. Its function is as follows. Nucleotidyltransferase involved in the post-translational modification of proteins. It can catalyze the addition of adenosine monophosphate (AMP) or uridine monophosphate (UMP) to a protein, resulting in modifications known as AMPylation and UMPylation. This is Protein nucleotidyltransferase YdiU from Escherichia coli O1:K1 / APEC.